The sequence spans 399 residues: Elongation factor Tu (399 aa).

A tr-type G domain is found at 10–209 (KPHVNIGTIG…AVDDYIPTPV (200 aa)). A G1 region spans residues 19–26 (GHVDHGKT). A GTP-binding site is contributed by 19-26 (GHVDHGKT). Threonine 26 is a Mg(2+) binding site. The G2 stretch occupies residues 62 to 66 (GITIN). Residues 83–86 (DCPG) form a G3 region. Residues 83–87 (DCPGH) and 138–141 (NKCD) each bind GTP. A G4 region spans residues 138-141 (NKCD). The segment at 175–177 (SAY) is G5.

It belongs to the TRAFAC class translation factor GTPase superfamily. Classic translation factor GTPase family. EF-Tu/EF-1A subfamily. Monomer.

It localises to the cytoplasm. The enzyme catalyses GTP + H2O = GDP + phosphate + H(+). In terms of biological role, GTP hydrolase that promotes the GTP-dependent binding of aminoacyl-tRNA to the A-site of ribosomes during protein biosynthesis. This Bifidobacterium longum (strain DJO10A) protein is Elongation factor Tu.